We begin with the raw amino-acid sequence, 300 residues long: Merozoite surface protein 2 (300 aa).

The first 20 residues, Met-1–Ile-20, serve as a signal peptide directing secretion. N-linked (GlcNAc...) asparagine glycans are attached at residues Asn-22 and Asn-36. The interval Glu-44–Ser-226 is polymorphic region. The stretch at Gly-51–Ala-58 is one 1; inverted repeat. The segment at Gly-51–Ala-74 is 7 X 8 AA tandem repeats of G-S-G-A-G-A-V-A. 5 repeat units span residues Gly-61–Ala-68, Gly-69–Ala-76, Gly-77–Ala-84, Gly-85–Ala-92, and Gly-93–Ala-100. Residues Gly-103 to Ala-110 form a 7; inverted repeat. A disordered region spans residues Gly-111 to Asn-261. Positions Pro-124–Glu-148 are enriched in low complexity. The span at Asn-149–Val-165 shows a compositional bias: basic and acidic residues. 2 stretches are compositionally biased toward polar residues: residues Lys-167–Arg-193 and Lys-200–Pro-228. N-linked (GlcNAc...) asparagine glycosylation is present at Asn-177. Asn-249 carries an N-linked (GlcNAc...) asparagine glycan. Residues Cys-257 and Cys-265 are joined by a disulfide bond. N-linked (GlcNAc...) asparagine glycosylation is found at Asn-273 and Asn-274. Asn-274 is lipidated: GPI-anchor amidated asparagine. The propeptide at Ser-275 to Ile-300 is removed in mature form.

The protein localises to the cell membrane. Its function is as follows. May play a role in the merozoite attachment to the erythrocyte. This Plasmodium falciparum (isolate mad71 / Papua New Guinea) protein is Merozoite surface protein 2.